The sequence spans 87 residues: Small ribosomal subunit protein bS20 (87 aa).

A disordered region spans residues 1 to 26 (MANIKSAQKRAVQSEKRRQHNASQRS).

Belongs to the bacterial ribosomal protein bS20 family.

Binds directly to 16S ribosomal RNA. The chain is Small ribosomal subunit protein bS20 from Glaesserella parasuis serovar 5 (strain SH0165) (Haemophilus parasuis).